The following is a 258-amino-acid chain: Type III pantothenate kinase (258 aa).

Aspartate 9–asparagine 16 is a binding site for ATP. Residue glycine 110–arginine 113 coordinates substrate. Aspartate 112 (proton acceptor) is an active-site residue. Aspartate 132 is a binding site for K(+). ATP is bound at residue threonine 135. Residue threonine 187 coordinates substrate.

It belongs to the type III pantothenate kinase family. As to quaternary structure, homodimer. NH4(+) serves as cofactor. Requires K(+) as cofactor.

It is found in the cytoplasm. It carries out the reaction (R)-pantothenate + ATP = (R)-4'-phosphopantothenate + ADP + H(+). It participates in cofactor biosynthesis; coenzyme A biosynthesis; CoA from (R)-pantothenate: step 1/5. Catalyzes the phosphorylation of pantothenate (Pan), the first step in CoA biosynthesis. This is Type III pantothenate kinase from Dehalococcoides mccartyi (strain ATCC BAA-2266 / KCTC 15142 / 195) (Dehalococcoides ethenogenes (strain 195)).